A 481-amino-acid polypeptide reads, in one-letter code: MSTARTENPVLMGMSSQNGQLRGPLKPSAGPGGGGTQTQQINQLKNASTINSGSQQQAQSMSSVIKPGDDWKKTLKLPPKDLRIKTSDVTSTKGNEFEDYCLKRELLMGIFEMGWEKPSPIQEESIPIALSGRDILARAKNGTGKSGAYLIPLLERLDLKKDCIQAMVIVPTRELALQVSQICIQVSKHMGGVKVMATTGGTNLRDDIMRLDDTVHVVIATPGRILDLIKKGVAKVDHIQMIVLDEADKLLSQDFVQIMEDIIITLPKNRQILLYSATFPLSVQKFMTSHLQKPYEINLMEELTLKGVTQYYAYVTERQKVHCLNTLFSRLQINQSIIFCNSSQRVELLAKKISQLGYSCFYIHAKMRQEHRNRVFHDFRNGLCRNLVCTDLFTRGIDIQAVNVVINFDFPKLAETYLHRIGRSGRFGHLGLAINLITYDDRFNLKSIEEQLGTEIKPIPSSIDKSLYVAEYHSESGEDKP.

A disordered region spans residues Met-1–Lys-72. The segment covering Ile-41–Asn-51 has biased composition (polar residues). Residues Ser-52–Ser-63 show a composition bias toward low complexity. The Q motif signature appears at Asn-95–Glu-123. Residues Ile-126–Ile-297 form the Helicase ATP-binding domain. Ala-139 to Ser-146 lines the ATP pocket. Residues Asp-245 to Asp-248 carry the DEAD box motif. One can recognise a Helicase C-terminal domain in the interval Gly-307–Leu-467.

Belongs to the DEAD box helicase family. DDX6/DHH1 subfamily. In terms of assembly, component of a ribonucleoprotein (RNP) complex, composed at least of cpeb1, lsm14b/rap55b, ddx6/Xp54, ybx2/frgy2, pat1/P100, eif4enif1/4E-T and eif4e1b. Component of a ribonucleoprotein (RNP) complex, composed at least of elavl1/elrA and/or elavl2/elrB, igf2bp3/vg1RBP, ddx6/Xp54, ybx2/frgy2, lsm14b/rap55b and, in a subset of RNP complexes, stau1/staufen. Component of a ribonucleoprotein (RNP) complex, composed at least of lsm14a/rap55a, ybx2/frgy2, ddx6/Xp54 and eif4enif1/4E-T. Interacts with lsm14a/rap55a.

It localises to the cytoplasm. It is found in the P-body. Its subcellular location is the nucleus. It catalyses the reaction ATP + H2O = ADP + phosphate + H(+). ATP-dependent RNA helicase that is an integral component of messenger ribonucleoprotein complexes (mRNPs), storage particles that mask maternal mRNAs from the translational apparatus during oocyte maturation. The protein is Probable ATP-dependent RNA helicase ddx6 (ddx6) of Xenopus tropicalis (Western clawed frog).